Consider the following 72-residue polypeptide: Exodeoxyribonuclease 7 small subunit (72 aa).

Belongs to the XseB family. Heterooligomer composed of large and small subunits.

It is found in the cytoplasm. The catalysed reaction is Exonucleolytic cleavage in either 5'- to 3'- or 3'- to 5'-direction to yield nucleoside 5'-phosphates.. Bidirectionally degrades single-stranded DNA into large acid-insoluble oligonucleotides, which are then degraded further into small acid-soluble oligonucleotides. The polypeptide is Exodeoxyribonuclease 7 small subunit (Chlamydia trachomatis serovar A (strain ATCC VR-571B / DSM 19440 / HAR-13)).